Here is a 255-residue protein sequence, read N- to C-terminus: MATLYWQTEGAGNTDLVLLHGWGLNAQVWQSIIARLAPHFRLHVVDLPGYGRSQGFGAMSLSDMANIVLAQAPERAIWLGWSLGGLVASQIALSAPERVDKLITVASSPCFSAQDGWPGIKPDVLQGFQQQLSEDFQRTVERFLALQTLGTESARQDARLLKSVVLEQPMPSVEVLNGGLDILREADLRQPLADLAVPFLRLYGALDGLVPRKVAGLLDEQWLNSTSVVIPKAAHAPFISHPDAFTEQVIAFAQA.

Residues 16–242 (LVLLHGWGLN…AAHAPFISHP (227 aa)) enclose the AB hydrolase-1 domain. Substrate is bound by residues Trp22, 82 to 83 (SL), and 143 to 147 (FLALQ). Ser82 (nucleophile) is an active-site residue. Residues Asp207 and His235 contribute to the active site. Residue His235 participates in substrate binding.

Belongs to the AB hydrolase superfamily. Carboxylesterase BioH family. In terms of assembly, monomer.

Its subcellular location is the cytoplasm. The enzyme catalyses 6-carboxyhexanoyl-[ACP] methyl ester + H2O = 6-carboxyhexanoyl-[ACP] + methanol + H(+). Its pathway is cofactor biosynthesis; biotin biosynthesis. Its function is as follows. The physiological role of BioH is to remove the methyl group introduced by BioC when the pimeloyl moiety is complete. It allows to synthesize pimeloyl-ACP via the fatty acid synthetic pathway through the hydrolysis of the ester bonds of pimeloyl-ACP esters. The sequence is that of Pimeloyl-[acyl-carrier protein] methyl ester esterase from Pectobacterium carotovorum subsp. carotovorum (strain PC1).